Reading from the N-terminus, the 375-residue chain is MNVYQSLLQPFVFQTLRADPETVKLQLLRLGESIERHSDRPPARWIKQQLAQTFSLPTPELSQQLWGLTFPNPIGLAAGLDKDGVAAGLWGSFGFGFAEVGTVTYHPQPGNPRPRLFRLPADRAGINRMGFNNRGAAALAQTLEQAQKRSARTIPLGINLGKSKVTPLEEAVEDYLGSFRLLQAWGDYFVINVSSPNTPGLRSLQTAANLEPILSALQNENQARRPLLLKISPDLAWEDLATIIDLVKTYQWAGLIATNTTIARPELQTKVIPQTGKSPQEEAGGLSGAPLKQRSTEVIRFIHQQTGGQLPIIGVGGVFTAADAWEKIMAGATLIQVYTGWIYEGPGMVKQLLTGLQTELQQRGLDCLAALDRQP.

FMN contacts are provided by residues 78-82 (AGLDK) and Thr-102. Lys-82 contacts substrate. Position 127 to 131 (127 to 131 (NRMGF)) interacts with substrate. FMN-binding residues include Asn-159 and Asn-192. Position 192 (Asn-192) interacts with substrate. Ser-195 functions as the Nucleophile in the catalytic mechanism. Asn-197 lines the substrate pocket. Residues Lys-230 and Thr-258 each coordinate FMN. Substrate is bound at residue 259-260 (NT). Residues Gly-288, Gly-317, and 338–339 (YT) contribute to the FMN site.

The protein belongs to the dihydroorotate dehydrogenase family. Type 2 subfamily. In terms of assembly, monomer. It depends on FMN as a cofactor.

It is found in the cell membrane. The catalysed reaction is (S)-dihydroorotate + a quinone = orotate + a quinol. It functions in the pathway pyrimidine metabolism; UMP biosynthesis via de novo pathway; orotate from (S)-dihydroorotate (quinone route): step 1/1. Functionally, catalyzes the conversion of dihydroorotate to orotate with quinone as electron acceptor. The protein is Dihydroorotate dehydrogenase (quinone) of Cyanothece sp. (strain PCC 7425 / ATCC 29141).